We begin with the raw amino-acid sequence, 409 residues long: tRNA(Met) cytidine acetate ligase (409 aa).

ATP-binding positions include 7–20, glycine 102, asparagine 169, and arginine 194; that span reads VVEY…HLYH.

This sequence belongs to the TmcAL family.

It is found in the cytoplasm. It carries out the reaction cytidine(34) in elongator tRNA(Met) + acetate + ATP = N(4)-acetylcytidine(34) in elongator tRNA(Met) + AMP + diphosphate. In terms of biological role, catalyzes the formation of N(4)-acetylcytidine (ac(4)C) at the wobble position of elongator tRNA(Met), using acetate and ATP as substrates. First activates an acetate ion to form acetyladenylate (Ac-AMP) and then transfers the acetyl group to tRNA to form ac(4)C34. The protein is tRNA(Met) cytidine acetate ligase of Clostridium botulinum (strain Langeland / NCTC 10281 / Type F).